Here is a 249-residue protein sequence, read N- to C-terminus: Tumor necrosis factor ligand superfamily member 12 (249 aa).

The Cytoplasmic segment spans residues 1 to 21 (MAARRSQRRRGRRGEPGTALL). A helical; Signal-anchor for type II membrane protein transmembrane segment spans residues 22-45 (APLVLSLGLALACLGLLLVVVSLG). Over 46–249 (SWATLSAQEP…LTYFGLFQVH (204 aa)) the chain is Extracellular. Positions 52–78 (AQEPSQEELTAEDRREPPELNPQTEES) are disordered. One can recognise a THD domain in the interval 107–248 (IAAHYEVHPR…FLTYFGLFQV (142 aa)). N-linked (GlcNAc...) asparagine glycosylation is present at N139. A disulfide bridge links C191 with C210.

The protein belongs to the tumor necrosis factor family. In terms of assembly, homotrimer. Interacts with the angiogenic factor AGGF1/VG5Q. Post-translationally, the soluble form is produced from the membrane form by proteolytic processing. In terms of tissue distribution, widely expressed.

The protein resides in the cell membrane. Its subcellular location is the secreted. Functionally, binds to FN14 and possibly also to TNRFSF12/APO3. Weak inducer of apoptosis in some cell types. Mediates NF-kappa-B activation. Promotes angiogenesis and the proliferation of endothelial cells. Also involved in induction of inflammatory cytokines. Promotes IL8 secretion. This is Tumor necrosis factor ligand superfamily member 12 (Tnfsf12) from Mus musculus (Mouse).